A 92-amino-acid polypeptide reads, in one-letter code: Small ribosomal subunit protein uS19 (92 aa).

This sequence belongs to the universal ribosomal protein uS19 family.

In terms of biological role, protein S19 forms a complex with S13 that binds strongly to the 16S ribosomal RNA. This is Small ribosomal subunit protein uS19 from Azorhizobium caulinodans (strain ATCC 43989 / DSM 5975 / JCM 20966 / LMG 6465 / NBRC 14845 / NCIMB 13405 / ORS 571).